Consider the following 317-residue polypeptide: NADH-quinone oxidoreductase subunit H 1 (317 aa).

Helical transmembrane passes span 7-27 (IWVNLILILAVLFAFAAMLSW), 74-94 (AVFVLAPAIVAVTTLLAFAVV), 107-127 (IGVLFFLAMSSLGVYSIVLGG), 147-167 (LSYEVFMGLALMGVVMLAGSF), 179-199 (LWFCIPQILGLATFAVAGIAE), 230-250 (FFIGEYVGITLISAMIVTLFF), 257-277 (VLPPLAWFLLKTFIVIICFVL), and 297-317 (VMLPVTLVNLLLTGAVVLSVA).

This sequence belongs to the complex I subunit 1 family. As to quaternary structure, NDH-1 is composed of 14 different subunits. Subunits NuoA, H, J, K, L, M, N constitute the membrane sector of the complex.

It localises to the cell inner membrane. The enzyme catalyses a quinone + NADH + 5 H(+)(in) = a quinol + NAD(+) + 4 H(+)(out). Its function is as follows. NDH-1 shuttles electrons from NADH, via FMN and iron-sulfur (Fe-S) centers, to quinones in the respiratory chain. The immediate electron acceptor for the enzyme in this species is believed to be ubiquinone. Couples the redox reaction to proton translocation (for every two electrons transferred, four hydrogen ions are translocated across the cytoplasmic membrane), and thus conserves the redox energy in a proton gradient. This subunit may bind ubiquinone. The protein is NADH-quinone oxidoreductase subunit H 1 of Nitrosospira multiformis (strain ATCC 25196 / NCIMB 11849 / C 71).